A 473-amino-acid chain; its full sequence is Cysteine--tRNA ligase (473 aa).

Zn(2+) is bound at residue Cys-28. The 'HIGH' region motif lies at 30-40; it reads MTVYDFCHIGH. 3 residues coordinate Zn(2+): Cys-212, His-237, and Glu-241. A 'KMSKS' region motif is present at residues 277 to 281; that stretch reads KMSKS. Lys-280 contacts ATP.

The protein belongs to the class-I aminoacyl-tRNA synthetase family. Monomer. The cofactor is Zn(2+).

It localises to the cytoplasm. It carries out the reaction tRNA(Cys) + L-cysteine + ATP = L-cysteinyl-tRNA(Cys) + AMP + diphosphate. This Polynucleobacter necessarius subsp. necessarius (strain STIR1) protein is Cysteine--tRNA ligase.